The following is a 508-amino-acid chain: Adenosine deaminase (508 aa).

Positions 1-18 (MFSQLVVWLLATSTVCLA) are cleaved as a signal peptide.

The protein belongs to the metallo-dependent hydrolases superfamily. Adenosine and AMP deaminases family. ADGF subfamily. The cofactor is Zn(2+). In terms of tissue distribution, salivary gland (at protein level).

It localises to the secreted. The catalysed reaction is adenosine + H2O + H(+) = inosine + NH4(+). Functionally, catalyzes the deamination of adenosine to inosine. The sequence is that of Adenosine deaminase from Lutzomyia longipalpis (Sand fly).